The following is a 749-amino-acid chain: Protein lin-54 homolog (749 aa).

Residue Lys139 forms a Glycyl lysine isopeptide (Lys-Gly) (interchain with G-Cter in SUMO2) linkage. N6-acetyllysine is present on residues Lys244 and Lys249. 4 positions are modified to phosphoserine: Ser264, Ser282, Ser310, and Ser314. Residue Lys357 forms a Glycyl lysine isopeptide (Lys-Gly) (interchain with G-Cter in SUMO2) linkage. In terms of domain architecture, CRC spans 521–634; the sequence is PRKPCNCTKS…KCIGCKNFEE (114 aa). The interval 523-536 is DNA-binding; that stretch reads KPCNCTKSLCLKLY. 9 residues coordinate Zn(2+): Cys525, Cys527, Cys532, Cys537, Cys539, Cys546, Cys549, Cys551, and Cys554. Residues 583 to 596 are linker; sequence IGKGKEGESDRRHS. Cys599, Cys601, Cys606, Cys611, Cys613, Cys620, Cys624, Cys626, and Cys629 together coordinate Zn(2+). The DNA-binding stretch occupies residues 599–612; sequence CNCKRSGCLKNYCE. Ser635 carries the post-translational modification Phosphoserine. Glycyl lysine isopeptide (Lys-Gly) (interchain with G-Cter in SUMO2) cross-links involve residues Lys639, Lys659, and Lys661.

This sequence belongs to the lin-54 family. Component of the DREAM complex (also named LINC complex) at least composed of E2F4, E2F5, LIN9, LIN37, LIN52, LIN54, MYBL1, MYBL2, RBL1, RBL2, RBBP4, RBL2, TFDP1 and TFDP2. The complex exists in quiescent cells where it represses cell cycle-dependent genes. It dissociates in S phase when LIN9, LIN37, LIN52 and LIN54 form a subcomplex that binds to MYBL2.

It is found in the nucleus. Functionally, component of the DREAM complex, a multiprotein complex that can both act as a transcription activator or repressor depending on the context. In G0 phase, the complex binds to more than 800 promoters and is required for repression of E2F target genes. In S phase, the complex selectively binds to the promoters of G2/M genes whose products are required for mitosis and participates in their cell cycle dependent activation. In the complex, acts as a DNA-binding protein that binds the promoter of CDK1 in a sequence-specific manner. Specifically recognizes the consensus motif 5'-TTYRAA-3' in target DNA. The polypeptide is Protein lin-54 homolog (Lin54) (Mus musculus (Mouse)).